A 415-amino-acid chain; its full sequence is Plant UBX domain-containing protein 16 (415 aa).

The UBA domain maps to 19 to 69 (QLDEEIVLFRQDQLISSFLEIAVDQTAETARILLQTTDWNIDQAVNLFLTN). The region spanning 333–413 (DRSVVCSLCV…GLANSLISVT (81 aa)) is the UBX domain.

The polypeptide is Plant UBX domain-containing protein 16 (Arabidopsis thaliana (Mouse-ear cress)).